A 91-amino-acid polypeptide reads, in one-letter code: Small ribosomal subunit protein uS19 (91 aa).

Belongs to the universal ribosomal protein uS19 family.

Functionally, protein S19 forms a complex with S13 that binds strongly to the 16S ribosomal RNA. The sequence is that of Small ribosomal subunit protein uS19 from Azotobacter vinelandii (strain DJ / ATCC BAA-1303).